A 77-amino-acid polypeptide reads, in one-letter code: Sec-independent protein translocase protein TatA (77 aa).

Residues 1–21 (MGSFSIWHWLIVLVIVMLVFG) form a helical membrane-spanning segment. Positions 46 to 77 (GEGKAAADPAQSKELRDSTTIDVEAKEKTRQQ) are disordered.

The protein belongs to the TatA/E family. In terms of assembly, the Tat system comprises two distinct complexes: a TatABC complex, containing multiple copies of TatA, TatB and TatC subunits, and a separate TatA complex, containing only TatA subunits. Substrates initially bind to the TatABC complex, which probably triggers association of the separate TatA complex to form the active translocon.

It localises to the cell inner membrane. Functionally, part of the twin-arginine translocation (Tat) system that transports large folded proteins containing a characteristic twin-arginine motif in their signal peptide across membranes. TatA could form the protein-conducting channel of the Tat system. In Cupriavidus necator (strain ATCC 17699 / DSM 428 / KCTC 22496 / NCIMB 10442 / H16 / Stanier 337) (Ralstonia eutropha), this protein is Sec-independent protein translocase protein TatA.